A 145-amino-acid chain; its full sequence is UPF0735 ACT domain-containing protein CPE1414 (145 aa).

The ACT domain maps to 69–144 (IFNMVVTHEK…GVEKVEFVAM (76 aa)).

The protein belongs to the UPF0735 family.

The protein is UPF0735 ACT domain-containing protein CPE1414 of Clostridium perfringens (strain 13 / Type A).